The following is a 211-amino-acid chain: Urease accessory protein UreF (211 aa).

It belongs to the UreF family. UreD, UreF and UreG form a complex that acts as a GTP-hydrolysis-dependent molecular chaperone, activating the urease apoprotein by helping to assemble the nickel containing metallocenter of UreC. The UreE protein probably delivers the nickel.

Its subcellular location is the cytoplasm. In terms of biological role, required for maturation of urease via the functional incorporation of the urease nickel metallocenter. In Mycobacterium sp. (strain JLS), this protein is Urease accessory protein UreF.